We begin with the raw amino-acid sequence, 205 residues long: Large ribosomal subunit protein uL4 (205 aa).

The protein belongs to the universal ribosomal protein uL4 family. Part of the 50S ribosomal subunit.

In terms of biological role, one of the primary rRNA binding proteins, this protein initially binds near the 5'-end of the 23S rRNA. It is important during the early stages of 50S assembly. It makes multiple contacts with different domains of the 23S rRNA in the assembled 50S subunit and ribosome. Its function is as follows. Forms part of the polypeptide exit tunnel. The chain is Large ribosomal subunit protein uL4 from Thermus thermophilus (strain ATCC BAA-163 / DSM 7039 / HB27).